A 346-amino-acid chain; its full sequence is tRNA N6-adenosine threonylcarbamoyltransferase (346 aa).

The Fe cation site is built by His111 and His115. Substrate contacts are provided by residues 134–138 (LVSGG), Asp167, Gly180, and Asn277. Fe cation is bound at residue Asp305.

It belongs to the KAE1 / TsaD family. It depends on Fe(2+) as a cofactor.

Its subcellular location is the cytoplasm. It carries out the reaction L-threonylcarbamoyladenylate + adenosine(37) in tRNA = N(6)-L-threonylcarbamoyladenosine(37) in tRNA + AMP + H(+). In terms of biological role, required for the formation of a threonylcarbamoyl group on adenosine at position 37 (t(6)A37) in tRNAs that read codons beginning with adenine. Is involved in the transfer of the threonylcarbamoyl moiety of threonylcarbamoyl-AMP (TC-AMP) to the N6 group of A37, together with TsaE and TsaB. TsaD likely plays a direct catalytic role in this reaction. This is tRNA N6-adenosine threonylcarbamoyltransferase from Bordetella pertussis (strain Tohama I / ATCC BAA-589 / NCTC 13251).